We begin with the raw amino-acid sequence, 67 residues long: SPbeta prophage-derived uncharacterized protein YopZ (67 aa).

Residues 1–40 are a coiled coil; it reads MTSEMQLQAQIDVIEKENKELRRRNEELGQTVECQNKQIV. A helical transmembrane segment spans residues 44–66; sequence WRLLFFASSWIVYGIVSAIKYLW.

It is found in the cell membrane. This chain is SPbeta prophage-derived uncharacterized protein YopZ (yopZ), found in Bacillus subtilis (strain 168).